A 625-amino-acid chain; its full sequence is DNA mismatch repair protein MutL (625 aa).

This sequence belongs to the DNA mismatch repair MutL/HexB family.

In terms of biological role, this protein is involved in the repair of mismatches in DNA. It is required for dam-dependent methyl-directed DNA mismatch repair. May act as a 'molecular matchmaker', a protein that promotes the formation of a stable complex between two or more DNA-binding proteins in an ATP-dependent manner without itself being part of a final effector complex. This Bacteroides fragilis (strain YCH46) protein is DNA mismatch repair protein MutL.